The chain runs to 188 residues: MTVLTQTTKHIESLLGQMKQIHRETFMQVDQQAFRQGMSNLGAAVNVITTDGVAGKSGFTASAVCSVTDTPPTLLVCLNRSASVFETFKQNQVLCVNTLAAHQAHLSNIFGGKTPMVDRFAHGEWRTLATQAPVLTDALVSFDCEVVQSLSVGSHDVFFCQVKAIQHCQGQNALMYFNRNYCEPHCVA.

Belongs to the non-flavoprotein flavin reductase family. RutF subfamily.

It carries out the reaction FMNH2 + NAD(+) = FMN + NADH + 2 H(+). In terms of biological role, catalyzes the reduction of FMN to FMNH2 which is used to reduce pyrimidine by RutA via the Rut pathway. This Acinetobacter baylyi (strain ATCC 33305 / BD413 / ADP1) protein is FMN reductase (NADH) RutF.